We begin with the raw amino-acid sequence, 772 residues long: Alpha-xylosidase (772 aa).

Asp416 (nucleophile) is an active-site residue. Glu419 is an active-site residue. The active-site Proton donor is Asp482.

This sequence belongs to the glycosyl hydrolase 31 family. As to quaternary structure, homohexamer.

It carries out the reaction Hydrolysis of terminal, non-reducing alpha-D-xylose residues with release of alpha-D-xylose.. Functionally, can catalyze the transfer of alpha-xylosyl residue from alpha-xyloside to xylose, glucose, mannose, fructose, maltose, isomaltose, nigerose, kojibiose, sucrose and trehalose. The protein is Alpha-xylosidase (yicI) of Escherichia coli (strain K12).